The sequence spans 185 residues: Coordinator of PRMT5 and differentiation stimulator (185 aa).

Met1 carries the N-acetylmethionine modification. Residues 1–109 (MDPPTAGAQS…MSGCLPKEQA (109 aa)) are disordered. Basic and acidic residues-rich tracts occupy residues 42–52 (SSQEKATENAT) and 66–77 (SPAHGEGTHCEE). Ser66 is subject to Phosphoserine. Positions 78 to 89 (EGFAEDDEDSDG) are enriched in acidic residues.

As to quaternary structure, interacts with PRMT5. Interacts with histone H4; specifically interacts with the N-terminus of histone H4 but not with histone H3. Interacts with CBFB. Found in a complex with PRMT5, RUNX1 and CBFB.

The protein resides in the nucleus. Its function is as follows. Histone-binding protein required for histone H4 methyltransferase activity of PRMT5. Specifically required for histone H4 'Arg-3' methylation mediated by PRMT5, but not histone H3 'Arg-8' methylation, suggesting that it modulates the substrate specificity of PRMT5. Specifically interacts with the N-terminus of histone H4 but not with histone H3, suggesting that it acts by promoting the association between histone H4 and PRMT5. Involved in CCNE1 promoter repression. Plays a role in muscle cell differentiation by modulating the recruitment of PRMT5 to the promoter of genes involved in the coordination between cell cycle exit and muscle differentiation. The polypeptide is Coordinator of PRMT5 and differentiation stimulator (COPRS) (Bos taurus (Bovine)).